A 130-amino-acid polypeptide reads, in one-letter code: Protein ApaG (130 aa).

One can recognise an ApaG domain in the interval 3-127 (RALTRDIEVT…FSLDSPGLMR (125 aa)).

The polypeptide is Protein ApaG (Agrobacterium fabrum (strain C58 / ATCC 33970) (Agrobacterium tumefaciens (strain C58))).